A 436-amino-acid chain; its full sequence is GTPase Der (436 aa).

2 consecutive EngA-type G domains span residues 4–167 and 176–351; these read PVVA…PKRG and IKFC…ENHA. GTP is bound by residues 10–17, 57–61, 119–122, 182–189, 229–233, and 294–297; these read GRPNVGKS, DTGGI, NKID, DTAGM, and NKWD. One can recognise a KH-like domain in the interval 352–436; sequence MRVQTNVLNE…PIKIIARPRK (85 aa).

Belongs to the TRAFAC class TrmE-Era-EngA-EngB-Septin-like GTPase superfamily. EngA (Der) GTPase family. As to quaternary structure, associates with the 50S ribosomal subunit.

In terms of biological role, GTPase that plays an essential role in the late steps of ribosome biogenesis. In Geobacillus sp. (strain WCH70), this protein is GTPase Der.